We begin with the raw amino-acid sequence, 836 residues long: Enhancer of polycomb homolog 1 (836 aa).

A Glycyl lysine isopeptide (Lys-Gly) (interchain with G-Cter in SUMO2) cross-link involves residue Lys319. Disordered regions lie at residues 335-360 (KRKY…SPAA) and 372-401 (YDFP…PDGP). Low complexity predominate over residues 346 to 360 (PSSAAATPQQTSPAA). Ser539 carries the post-translational modification Phosphoserine. Lys673 participates in a covalent cross-link: Glycyl lysine isopeptide (Lys-Gly) (interchain with G-Cter in SUMO2). Residues 802–829 (VPSSSSVDSVPRENHESEKPALNNIADN) are disordered. A compositionally biased stretch (basic and acidic residues) spans 811–820 (VPRENHESEK).

The protein belongs to the enhancer of polycomb family. In terms of assembly, component of the NuA4 histone acetyltransferase complex which contains the catalytic subunit KAT5/TIP60 and the subunits EP400, TRRAP/PAF400, BRD8/SMAP, EPC1, DMAP1/DNMAP1, RUVBL1/TIP49, RUVBL2, ING3, actin, ACTL6A/BAF53A, MORF4L1/MRG15, MORF4L2/MRGX, MRGBP, YEATS4/GAS41, VPS72/YL1 and MEAF6. KAT5/TIP60, EPC1, and ING3 together constitute a minimal HAT complex termed Piccolo NuA4. Component of a NuA4-related complex which contains EP400, TRRAP/PAF400, SRCAP, BRD8/SMAP, EPC1, DMAP1/DNMAP1, RUVBL1/TIP49, RUVBL2, actin, ACTL6A/BAF53A, VPS72 and YEATS4/GAS41. Interacts with TRIM27. Interacts with MBTD1; interaction is direct and promotes recruitment of MBTD1 into the NuA4 histone acetyltransferase complex.

The protein localises to the nucleus. The protein resides in the cytoplasm. Component of the NuA4 histone acetyltransferase (HAT) complex, a multiprotein complex involved in transcriptional activation of select genes principally by acetylation of nucleosomal histones H4 and H2A. The NuA4 complex plays a direct role in repair of DNA double-strand breaks (DSBs) by promoting homologous recombination (HR). The NuA4 complex is also required for spermatid development by promoting acetylation of histones: histone acetylation is required for histone replacement during the transition from round to elongating spermatids. In the NuA4 complex, EPC1 is required to recruit MBTD1 into the complex. This Homo sapiens (Human) protein is Enhancer of polycomb homolog 1.